The sequence spans 91 residues: Large ribosomal subunit protein uL23 (91 aa).

This sequence belongs to the universal ribosomal protein uL23 family. Part of the 50S ribosomal subunit. Contacts protein L29, and trigger factor when it is bound to the ribosome.

Functionally, one of the early assembly proteins it binds 23S rRNA. One of the proteins that surrounds the polypeptide exit tunnel on the outside of the ribosome. Forms the main docking site for trigger factor binding to the ribosome. In Macrococcus caseolyticus (strain JCSC5402) (Macrococcoides caseolyticum), this protein is Large ribosomal subunit protein uL23.